We begin with the raw amino-acid sequence, 440 residues long: Probable cytosolic iron-sulfur protein assembly protein 1 (440 aa).

WD repeat units lie at residues 12 to 51 (AHAE…SSDG), 71 to 110 (DHKR…SDDE), 148 to 187 (GHES…DFEC), 193 to 233 (EHSQ…WCIF), 278 to 317 (EEDE…PDSA), 326 to 379 (AHSR…SPSS), and 401 to 440 (HGVN…VVRD). Over residues 107 to 116 (SDDEEEEDEG) the composition is skewed to acidic residues. A disordered region spans residues 107–137 (SDDEEEEDEGAQGVYKPAGVDSDGDGDGGKE).

Belongs to the WD repeat CIA1 family.

Essential component of the cytosolic iron-sulfur (Fe/S) protein assembly machinery. Required for the maturation of extramitochondrial Fe/S proteins. The sequence is that of Probable cytosolic iron-sulfur protein assembly protein 1 from Cryptococcus neoformans var. neoformans serotype D (strain B-3501A) (Filobasidiella neoformans).